The primary structure comprises 242 residues: DNA repair protein RecO (242 aa).

This sequence belongs to the RecO family.

In terms of biological role, involved in DNA repair and RecF pathway recombination. This chain is DNA repair protein RecO, found in Bacteroides fragilis (strain ATCC 25285 / DSM 2151 / CCUG 4856 / JCM 11019 / LMG 10263 / NCTC 9343 / Onslow / VPI 2553 / EN-2).